We begin with the raw amino-acid sequence, 638 residues long: DNA gyrase subunit B (638 aa).

Residues Arg-431 to Pro-545 enclose the Toprim domain. 3 residues coordinate Mg(2+): Glu-437, Asp-510, and Asp-512.

The protein belongs to the type II topoisomerase GyrB family. As to quaternary structure, heterotetramer, composed of two GyrA and two GyrB chains. In the heterotetramer, GyrA contains the active site tyrosine that forms a transient covalent intermediate with DNA, while GyrB binds cofactors and catalyzes ATP hydrolysis. The cofactor is Mg(2+). Requires Mn(2+) as cofactor. Ca(2+) serves as cofactor.

Its subcellular location is the cytoplasm. It carries out the reaction ATP-dependent breakage, passage and rejoining of double-stranded DNA.. In terms of biological role, a type II topoisomerase that negatively supercoils closed circular double-stranded (ds) DNA in an ATP-dependent manner to modulate DNA topology and maintain chromosomes in an underwound state. Negative supercoiling favors strand separation, and DNA replication, transcription, recombination and repair, all of which involve strand separation. Also able to catalyze the interconversion of other topological isomers of dsDNA rings, including catenanes and knotted rings. Type II topoisomerases break and join 2 DNA strands simultaneously in an ATP-dependent manner. The polypeptide is DNA gyrase subunit B (Metamycoplasma arthritidis (Mycoplasma arthritidis)).